A 181-amino-acid polypeptide reads, in one-letter code: UPF0302 protein lin2035 (181 aa).

Belongs to the UPF0302 family.

This is UPF0302 protein lin2035 from Listeria innocua serovar 6a (strain ATCC BAA-680 / CLIP 11262).